Here is a 231-residue protein sequence, read N- to C-terminus: Ribonuclease 3 (231 aa).

The RNase III domain maps to 3 to 130 (MHEFFENFGI…VTAAIYLDQT (128 aa)). A Mg(2+)-binding site is contributed by glutamate 43. The active site involves aspartate 47. Mg(2+)-binding residues include aspartate 116 and glutamate 119. Residue glutamate 119 is part of the active site. The DRBM domain maps to 157–228 (DYKSELQEII…AKDCLNKLKK (72 aa)).

This sequence belongs to the ribonuclease III family. In terms of assembly, homodimer. It depends on Mg(2+) as a cofactor.

It is found in the cytoplasm. The enzyme catalyses Endonucleolytic cleavage to 5'-phosphomonoester.. Digests double-stranded RNA. Involved in the processing of primary rRNA transcript to yield the immediate precursors to the large and small rRNAs (23S and 16S). Processes some mRNAs, and tRNAs when they are encoded in the rRNA operon. Processes pre-crRNA and tracrRNA of type II CRISPR loci if present in the organism. This is Ribonuclease 3 from Mesoplasma florum (strain ATCC 33453 / NBRC 100688 / NCTC 11704 / L1) (Acholeplasma florum).